We begin with the raw amino-acid sequence, 478 residues long: Tubulin gamma chain (478 aa).

GTP is bound at residue 141-147 (AGGTGSG). Positions 451 to 478 (ISQKESSSLANENGNGANNKPGKSAMAL) are disordered. A compositionally biased stretch (polar residues) spans 459–468 (LANENGNGAN).

The protein belongs to the tubulin family.

The protein resides in the cytoplasm. Its subcellular location is the cytoskeleton. The protein localises to the microtubule organizing center. It localises to the centrosome. In terms of biological role, tubulin is the major constituent of microtubules. The gamma chain is found at microtubule organizing centers (MTOC) such as the spindle poles or the centrosome, suggesting that it is involved in the minus-end nucleation of microtubule assembly. This chain is Tubulin gamma chain, found in Reticulomyxa filosa.